Here is a 509-residue protein sequence, read N- to C-terminus: Bestrophin-2a (509 aa).

The Cytoplasmic segment spans residues 1 to 31; it reads MTVTYTARVANARFGGFSQLLLLWRGSIYKL. A10 contacts Ca(2+). A helical membrane pass occupies residues 32–51; it reads LWRELLCFLGFYMALSAAYR. Topologically, residues 52-60 are extracellular; it reads FVLTEGQKR. A helical membrane pass occupies residues 61–82; that stretch reads YFEKLVIYCDQYASLIPVSFVL. At 83-238 the chain is on the cytoplasmic side; the sequence is GFYVTLVVNR…WISVPLVYTQ (156 aa). The chain crosses the membrane as a helical span at residues 239–255; sequence VVTIALYSYFLACLIGR. The Extracellular portion of the chain corresponds to 256–274; the sequence is QFLDPAQGYKDHDLDLCVP. A helical membrane pass occupies residues 275-288; it reads IFTLLQFFFYAGWL. The Cytoplasmic portion of the chain corresponds to 289–509; it reads KVAEQLINPF…PIGEEEENLA (221 aa). Residues Q293, N296, D301, and D304 each coordinate Ca(2+). Residues 454–509 form a disordered region; sequence DPGLPEPEAPPPAGPEPLTLIPGPVEPFSIVTMPGPRGPAPPWLPSPIGEEEENLA. 2 stretches are compositionally biased toward pro residues: residues 457-468 and 489-498; these read LPEPEAPPPAGP and PRGPAPPWLP.

It belongs to the anion channel-forming bestrophin (TC 1.A.46) family. Calcium-sensitive chloride channel subfamily. Pentamer. Interacts with GLUL; this interaction tethers a fraction of GLUL to the membrane, causing a decrease of cytosolic glutamine synthase (GS) activity and inhibits the chloride channel activity of BEST2 by affecting the gating at the aperture in the absence of intracellular glutamate. As to expression, mainly confined to the retinal pigment epithelium. Expressed in colon.

It is found in the cell membrane. The protein localises to the basolateral cell membrane. The enzyme catalyses chloride(in) = chloride(out). It carries out the reaction hydrogencarbonate(in) = hydrogencarbonate(out). The catalysed reaction is L-glutamate(out) = L-glutamate(in). It catalyses the reaction iodide(out) = iodide(in). The enzyme catalyses L-glutamine(out) = L-glutamine(in). Its activity is regulated as follows. Chloride channel activity is allosterically inhibited by GLUL/glutamine synthase (GS) which affects the gating at the aperture in the absence of intracellular glutamate. Inhibitory effect of GLUL is relieved upon increasing of L-glutamate intracellular level. Functionally, ligand-gated anion channel that allows the movement of anions across cell membranes when activated by calcium (Ca2+). Transports a large specter of anions, namely mediates the movement of chloride, L-glutamate and iodide. Calcium-binding triggers the dilation of the aperture, but calcium-dependent gating is only effective when the size of the passing anion is bigger than the closed aperture. Mediates the calcium-activated hydrogencarbonate movement and participates in colonic hydrogencarbonate secretion concomitant with mucin secretion. In non-pigmented epithelium (NPE), mediates the efflux of intracellular L-glutamate; binding of intracellular L-glutamate activates and open both the neck and the aperture of the channel, leading to L-glutamate exit promoting chloride influx movement from the extracellular side in trans. Also exhibits a directional permeability for intracellular glutamine, in a similar manner as for L-glutamate. This chain is Bestrophin-2a, found in Homo sapiens (Human).